The chain runs to 222 residues: Isoprenyl transferase (222 aa).

Asp-12 is an active-site residue. Asp-12 contacts Mg(2+). Substrate-binding positions include 13–16, Trp-17, and 57–59; these read GNRR and STE. The active-site Proton acceptor is Asn-60. Residues Trp-61, Arg-63, Arg-171, and 177 to 179 contribute to the substrate site; that span reads RLS. Glu-190 is a Mg(2+) binding site.

This sequence belongs to the UPP synthase family. In terms of assembly, homodimer. Mg(2+) serves as cofactor.

Catalyzes the condensation of isopentenyl diphosphate (IPP) with allylic pyrophosphates generating different type of terpenoids. The sequence is that of Isoprenyl transferase (uppS) from Campylobacter jejuni subsp. jejuni serotype O:2 (strain ATCC 700819 / NCTC 11168).